We begin with the raw amino-acid sequence, 138 residues long: Putative acyl-CoA thioesterase YneP (138 aa).

Residue Asp16 is part of the active site.

Belongs to the 4-hydroxybenzoyl-CoA thioesterase family.

In terms of biological role, has acyl-CoA thioesterase activity. The protein is Putative acyl-CoA thioesterase YneP (yneP) of Bacillus subtilis (strain 168).